A 120-amino-acid chain; its full sequence is Large ribosomal subunit protein uL18 (120 aa).

Residues 1 to 22 (MKVDRKTATHRRHQRIRRKIAG) form a disordered region. Residues 8 to 20 (ATHRRHQRIRRKI) show a composition bias toward basic residues.

Belongs to the universal ribosomal protein uL18 family. As to quaternary structure, part of the 50S ribosomal subunit; part of the 5S rRNA/L5/L18/L25 subcomplex. Contacts the 5S and 23S rRNAs.

Functionally, this is one of the proteins that bind and probably mediate the attachment of the 5S RNA into the large ribosomal subunit, where it forms part of the central protuberance. The sequence is that of Large ribosomal subunit protein uL18 from Gloeobacter violaceus (strain ATCC 29082 / PCC 7421).